A 134-amino-acid chain; its full sequence is Profilin-3 (134 aa).

A disulfide bond links Cys-13 and Cys-118. The Involved in PIP2 interaction signature appears at 84–100 (AVIRGKKGSGGITIKKT). Thr-114 is modified (phosphothreonine).

The protein belongs to the profilin family. Occurs in many kinds of cells as a complex with monomeric actin in a 1:1 ratio. In terms of processing, phosphorylated by MAP kinases.

It localises to the cytoplasm. The protein localises to the cytoskeleton. Functionally, binds to actin and affects the structure of the cytoskeleton. At high concentrations, profilin prevents the polymerization of actin, whereas it enhances it at low concentrations. This Olea europaea (Common olive) protein is Profilin-3.